A 200-amino-acid chain; its full sequence is MPPLLKLALELGPLLVFFFANARGEMLIERFPILGSIGAPIFLATALFMAATVIALAISWSMTRTLPIMPLVSGIVVLVFGALTLWLHNDTFIKMKPTIVNTLFGGILLGGLFFGKSLLGYVFDSAFRLDAEGWRKLTLRWGLFFIFLAIVNEIVWRNFSTDTWVSFKVWGIMPITIVFTLLQMPLIQKHSLTDEENTAS.

A run of 6 helical transmembrane segments spans residues 1 to 21 (MPPL…FFAN), 37 to 57 (IGAP…IALA), 66 to 86 (LPIM…LTLW), 103 to 123 (LFGG…GYVF), 136 to 156 (KLTL…EIVW), and 167 to 187 (FKVW…MPLI).

It belongs to the YciB family.

The protein localises to the cell inner membrane. Functionally, plays a role in cell envelope biogenesis, maintenance of cell envelope integrity and membrane homeostasis. In Brucella suis biovar 1 (strain 1330), this protein is Inner membrane-spanning protein YciB.